The following is a 124-amino-acid chain: Aspartate 1-decarboxylase (124 aa).

Serine 25 serves as the catalytic Schiff-base intermediate with substrate; via pyruvic acid. The residue at position 25 (serine 25) is a Pyruvic acid (Ser). Threonine 57 provides a ligand contact to substrate. Tyrosine 58 serves as the catalytic Proton donor. 73-75 (GAA) is a substrate binding site.

The protein belongs to the PanD family. As to quaternary structure, heterooctamer of four alpha and four beta subunits. Requires pyruvate as cofactor. Post-translationally, is synthesized initially as an inactive proenzyme, which is activated by self-cleavage at a specific serine bond to produce a beta-subunit with a hydroxyl group at its C-terminus and an alpha-subunit with a pyruvoyl group at its N-terminus.

The protein resides in the cytoplasm. It catalyses the reaction L-aspartate + H(+) = beta-alanine + CO2. Its pathway is cofactor biosynthesis; (R)-pantothenate biosynthesis; beta-alanine from L-aspartate: step 1/1. In terms of biological role, catalyzes the pyruvoyl-dependent decarboxylation of aspartate to produce beta-alanine. This is Aspartate 1-decarboxylase from Syntrophobacter fumaroxidans (strain DSM 10017 / MPOB).